Here is a 92-residue protein sequence, read N- to C-terminus: Alpha-conotoxin FrXXA (92 aa).

Residues Met-1–Gly-24 form the signal peptide. Residues Gln-25–Arg-45 constitute a propeptide that is removed on maturation. Intrachain disulfides connect Cys-63–Cys-72, Cys-68–Cys-80, Cys-73–Cys-90, and Cys-78–Cys-92.

It belongs to the conotoxin D superfamily. Homodimer; disulfide-linked. Post-translationally, the homodimer contains 10 disulfide bonds. As to expression, expressed by the venom duct.

It is found in the secreted. Its function is as follows. Alpha-conotoxins act on postsynaptic membranes, they bind to the nicotinic acetylcholine receptors (nAChR) and thus inhibit them. Through its two C-terminal domains, this homodimeric protein would bind to two nAChR allosteric sites, located outside the nAChR C-loop of the principal binding face and at the adjacent binding interface in a clockwise direction. This toxin blocks both neuronal and muscular subtypes: human alpha-7/CHRNA7, human alpha-3-beta-2 (CHRNA3-CHRNB2), human alpha-4-beta-2 (CHRNA4-CHRNB2), mouse adult muscular subtype alpha-1-beta-1-delta-epsilon (CHRNA1-CHRNB1-CHRND-CHRNE), and mouse fetal muscular subtype alpha-1-beta-1-gamma-delta (CHRNA1-CHRNB1-CHRNG-CHRND). Shows different dissociation rates towards the different subtypes, with a very slow rate towards alpha-7 subtype (almost irreversible), followed by the adult muscular subtype, the fetal muscular subtype, alpha-3-beta-2 and alpha-4-beta-2 (almost entirely reversible within a few minutes of washing). This is Alpha-conotoxin FrXXA from Conus fergusoni (Ferguson's cone).